A 122-amino-acid chain; its full sequence is Large ribosomal subunit protein uL14 (122 aa).

This sequence belongs to the universal ribosomal protein uL14 family. In terms of assembly, part of the 50S ribosomal subunit. Forms a cluster with proteins L3 and L19. In the 70S ribosome, L14 and L19 interact and together make contacts with the 16S rRNA in bridges B5 and B8.

Binds to 23S rRNA. Forms part of two intersubunit bridges in the 70S ribosome. This chain is Large ribosomal subunit protein uL14, found in Limosilactobacillus fermentum (strain NBRC 3956 / LMG 18251) (Lactobacillus fermentum).